The following is a 304-amino-acid chain: Mycothiol acetyltransferase (304 aa).

Residue E36 participates in 1D-myo-inositol 2-(L-cysteinylamino)-2-deoxy-alpha-D-glucopyranoside binding. Acetyl-CoA is bound at residue 73-75; the sequence is LFV. In terms of domain architecture, N-acetyltransferase spans 145 to 304; sequence LEIQTYTESV…EEHCVWAKSD (160 aa). 3 residues coordinate 1D-myo-inositol 2-(L-cysteinylamino)-2-deoxy-alpha-D-glucopyranoside: E179, K225, and E236. Residue 240–242 coordinates acetyl-CoA; sequence VGL. Position 274 (Y274) interacts with 1D-myo-inositol 2-(L-cysteinylamino)-2-deoxy-alpha-D-glucopyranoside. Position 279–284 (279–284) interacts with acetyl-CoA; it reads NDPAVK.

Belongs to the acetyltransferase family. MshD subfamily. In terms of assembly, monomer.

It carries out the reaction 1D-myo-inositol 2-(L-cysteinylamino)-2-deoxy-alpha-D-glucopyranoside + acetyl-CoA = mycothiol + CoA + H(+). Functionally, catalyzes the transfer of acetyl from acetyl-CoA to desacetylmycothiol (Cys-GlcN-Ins) to form mycothiol. This Corynebacterium aurimucosum (strain ATCC 700975 / DSM 44827 / CIP 107346 / CN-1) (Corynebacterium nigricans) protein is Mycothiol acetyltransferase.